A 92-amino-acid chain; its full sequence is Bombyxin A-3 (92 aa).

An N-terminal signal peptide occupies residues 1-19 (MKILLAIALMLSTVMWVST). At Gln20 the chain carries Pyrrolidone carboxylic acid. Intrachain disulfides connect Cys29-Cys79, Cys41-Cys92, and Cys78-Cys83. Positions 50 to 70 (SDAQYVSYGSAWLMPYSEGRG) are cleaved as a propeptide — c peptide like.

This sequence belongs to the insulin family. As to quaternary structure, heterodimer of a B chain and an A chain linked by two disulfide bonds.

The protein resides in the secreted. In terms of biological role, brain peptide responsible for activation of prothoracic glands to produce ecdysone in insects. The sequence is that of Bombyxin A-3 (BBXA3) from Bombyx mori (Silk moth).